A 78-amino-acid chain; its full sequence is MSKVCQVTGKRPVVGNNVSHANNKTKRRFEPNLHHHRFWLESEKRFVRLRLTTKGMRIIDKLGIEKVVADLRAQGQKI.

Belongs to the bacterial ribosomal protein bL28 family.

The sequence is that of Large ribosomal subunit protein bL28 from Acinetobacter baylyi (strain ATCC 33305 / BD413 / ADP1).